Consider the following 154-residue polypeptide: Putative protein heh-1 (154 aa).

Residues 1-15 form the signal peptide; the sequence is MKTVIFLALLGLAAA. Disulfide bonds link Cys-39–Cys-50 and Cys-97–Cys-103.

The protein belongs to the NPC2 family.

The protein localises to the secreted. The chain is Putative protein heh-1 (heh-1) from Caenorhabditis elegans.